The sequence spans 203 residues: Cutinase pbc1 (203 aa).

The signal sequence occupies residues 1–18 (MKVTALGNTLTGFGQALA). C32 and C107 form a disulfide bridge. The Nucleophile role is filled by S118. The cysteines at positions 166 and 173 are disulfide-linked. H170 is a catalytic residue. H183 serves as the catalytic Proton donor/acceptor.

Belongs to the cutinase family. Post-translationally, the 2 disulfide bonds play a critical role in holding the catalytic residues in juxta-position; reduction of the disulfide bridges results in the complete inactivation of the enzyme.

It is found in the secreted. The catalysed reaction is cutin + H2O = cutin monomers.. Functionally, catalyzes the hydrolysis of complex carboxylic polyesters found in the cell wall of plants. Degrades cutin, a macromolecule that forms the structure of the plant cuticle. Allows pathogenic fungi to penetrate through the cuticular barrier into the host plant during the initial stage of fungal infection. The chain is Cutinase pbc1 from Pyrenopeziza brassicae.